The sequence spans 558 residues: AP2-like ethylene-responsive transcription factor AIL5 (558 aa).

Low complexity predominate over residues 1–54 (MKNNNNKSSSSSSYDSSLSPSSSSSSHQNWLSFSLSNNNNNFNSSSNPNLTSST). Disordered stretches follow at residues 1–65 (MKNN…PSHL), 74–93 (SPVE…ATAV), and 166–195 (HSSE…KNVE). DNA-binding regions (AP2/ERF) lie at residues 203 to 269 (IYRG…TNFP) and 305 to 363 (MYRG…TNFD). The tract at residues 387-406 (SPATAAADKTVDLSPSDSPS) is disordered.

The protein belongs to the AP2/ERF transcription factor family. AP2 subfamily. As to expression, expressed in roots, seedlings, inflorescence, and siliques. Also detected at low levels in leaves.

It localises to the nucleus. Probably acts as a transcriptional activator. Binds to the GCC-box pathogenesis-related promoter element. May be involved in the regulation of gene expression by stress factors and by components of stress signal transduction pathways. Involved in the regulation of floral organs size. In Arabidopsis thaliana (Mouse-ear cress), this protein is AP2-like ethylene-responsive transcription factor AIL5.